The following is a 63-amino-acid chain: Venom peptide U-reduvitoxin-Pp19 (63 aa).

Positions 1-23 are cleaved as a signal peptide; sequence MSPYSILFVVVIALCLLPESIVG. 3 cysteine pairs are disulfide-bonded: C15–C62, C25–C53, and C30–C61.

As to expression, hemolymph (at protein level). Also weakly expressed by the venom gland (at protein level).

The protein resides in the secreted. Its function is as follows. Toxin with insecticidal activity. High doses of recombinant toxin causes impaired motor behavior of D.melanogaster, which progress slowly to paralysis and death after several hours. This Pristhesancus plagipennis (Common assassin bug) protein is Venom peptide U-reduvitoxin-Pp19.